We begin with the raw amino-acid sequence, 1382 residues long: Hepatocyte growth factor receptor (1382 aa).

Residues M1–G24 form the signal peptide. Over E25 to T933 the chain is Extracellular. The Sema domain maps to K27–L516. N-linked (GlcNAc...) asparagine glycosylation occurs at N45. 4 disulfide bridges follow: C95–C101, C98–C160, C133–C141, and C173–C176. N106 is a glycosylation site (N-linked (GlcNAc...) asparagine). Residues N203 and N359 are each glycosylated (N-linked (GlcNAc...) asparagine). Disulfide bonds link C299–C364 and C386–C398. Residues N400 and N406 are each glycosylated (N-linked (GlcNAc...) asparagine). 4 disulfide bridges follow: C521/C539, C527/C562, C530/C546, and C542/C552. IPT/TIG domains lie at P564 to V656, P658 to Q740, and P743 to V837. An O-linked (Man) threonine glycan is attached at T583. 2 N-linked (GlcNAc...) asparagine glycosylation sites follow: N608 and N636. 2 O-linked (Man) threonine glycosylation sites follow: T677 and T762. N786, N880, and N931 each carry an N-linked (GlcNAc...) asparagine glycan. Residues G934–L956 traverse the membrane as a helical segment. Topologically, residues K957–T1382 are cytoplasmic. Phosphoserine is present on S967. T978 bears the Phosphothreonine mark. S991, S998, and S1001 each carry phosphoserine. Phosphotyrosine is present on Y1004. The Protein kinase domain maps to V1079–I1346. Residues I1085–V1093 and K1111 each bind ATP. The active-site Proton acceptor is D1205. The interval L1213–T1382 is interaction with RANBP9. Residue Y1231 is modified to Phosphotyrosine. Phosphotyrosine; by autocatalysis occurs at positions 1235 and 1236. T1290 carries the post-translational modification Phosphothreonine. Residues W1321–V1360 are interaction with MUC20. A phosphotyrosine; by autocatalysis mark is found at Y1350 and Y1357. Y1366 carries the post-translational modification Phosphotyrosine.

This sequence belongs to the protein kinase superfamily. Tyr protein kinase family. In terms of assembly, heterodimer made of an alpha chain (50 kDa) and a beta chain (145 kDa) which are disulfide linked. Binds PLXNB1. Interacts when phosphorylated with downstream effectors including STAT3, PIK3R1, SRC, PCLG1, GRB2 and GAB1. Interacts with SPSB1, SPSB2 and SPSB4. Interacts with INPP5D/SHIP1. When phosphorylated at Tyr-1357, interacts with INPPL1/SHIP2. Interacts with RANBP9 and RANBP10, as well as SPSB1, SPSB2, SPSB3 and SPSB4. SPSB1 binding occurs in the presence and in the absence of HGF, however HGF treatment has a positive effect on this interaction. Interacts with MUC20; prevents interaction with GRB2 and suppresses hepatocyte growth factor-induced cell proliferation. Interacts with GRB10. Interacts with PTPN1 and PTPN2. Interacts with HSP90AA1 and HSP90AB1; the interaction suppresses MET kinase activity. Interacts with tensin TNS3. Interacts (when phosphorylated) with tensin TNS4 (via SH2 domain); the interaction increases MET protein stability by inhibiting MET endocytosis and subsequent lysosomal degradation. Autophosphorylated in response to ligand binding on Tyr-1235 and Tyr-1236 in the kinase domain leading to further phosphorylation of Tyr-1350 and Tyr-1357 in the C-terminal multifunctional docking site. Dephosphorylated by PTPRJ at Tyr-1350 and Tyr-1366. Dephosphorylated by PTPN1 and PTPN2. In terms of processing, ubiquitinated. Ubiquitination by CBL regulates the receptor stability and activity through proteasomal degradation. Post-translationally, O-mannosylation of IPT/TIG domains by TMEM260 is required for protein maturation. O-mannosylated residues are composed of single mannose glycans that are not elongated or modified.

It localises to the membrane. It carries out the reaction L-tyrosyl-[protein] + ATP = O-phospho-L-tyrosyl-[protein] + ADP + H(+). In its inactive state, the C-terminal tail interacts with the catalytic domain and inhibits the kinase activity. Upon ligand binding, the C-terminal tail is displaced and becomes phosphorylated, thus increasing the kinase activity. Its function is as follows. Receptor tyrosine kinase that transduces signals from the extracellular matrix into the cytoplasm by binding to hepatocyte growth factor/HGF ligand. Regulates many physiological processes including proliferation, scattering, morphogenesis and survival. Ligand binding at the cell surface induces autophosphorylation of MET on its intracellular domain that provides docking sites for downstream signaling molecules. Following activation by ligand, interacts with the PI3-kinase subunit PIK3R1, PLCG1, SRC, GRB2, STAT3 or the adapter GAB1. Recruitment of these downstream effectors by MET leads to the activation of several signaling cascades including the RAS-ERK, PI3 kinase-AKT, or PLCgamma-PKC. The RAS-ERK activation is associated with the morphogenetic effects while PI3K/AKT coordinates prosurvival effects. During embryonic development, MET signaling plays a role in gastrulation, development and migration of muscles and neuronal precursors, angiogenesis and kidney formation. In adults, participates in wound healing as well as organ regeneration and tissue remodeling. Also promotes differentiation and proliferation of hematopoietic cells. This is Hepatocyte growth factor receptor (MET) from Mustela putorius furo (European domestic ferret).